We begin with the raw amino-acid sequence, 166 residues long: CDP-archaeol synthase (166 aa).

A run of 4 helical transmembrane segments spans residues 42-62 (FFGG…AATA), 73-93 (FLSV…KSFL), 104-124 (SWFL…ILIF), and 128-148 (WLFG…TPLL).

It belongs to the CDP-archaeol synthase family. It depends on Mg(2+) as a cofactor.

It is found in the cell membrane. The enzyme catalyses 2,3-bis-O-(geranylgeranyl)-sn-glycerol 1-phosphate + CTP + H(+) = CDP-2,3-bis-O-(geranylgeranyl)-sn-glycerol + diphosphate. Its pathway is membrane lipid metabolism; glycerophospholipid metabolism. Functionally, catalyzes the formation of CDP-2,3-bis-(O-geranylgeranyl)-sn-glycerol (CDP-archaeol) from 2,3-bis-(O-geranylgeranyl)-sn-glycerol 1-phosphate (DGGGP) and CTP. This reaction is the third ether-bond-formation step in the biosynthesis of archaeal membrane lipids. This chain is CDP-archaeol synthase, found in Methanoculleus marisnigri (strain ATCC 35101 / DSM 1498 / JR1).